Reading from the N-terminus, the 418-residue chain is Gamma-glutamyl phosphate reductase (418 aa).

Belongs to the gamma-glutamyl phosphate reductase family.

The protein localises to the cytoplasm. The catalysed reaction is L-glutamate 5-semialdehyde + phosphate + NADP(+) = L-glutamyl 5-phosphate + NADPH + H(+). It functions in the pathway amino-acid biosynthesis; L-proline biosynthesis; L-glutamate 5-semialdehyde from L-glutamate: step 2/2. Its function is as follows. Catalyzes the NADPH-dependent reduction of L-glutamate 5-phosphate into L-glutamate 5-semialdehyde and phosphate. The product spontaneously undergoes cyclization to form 1-pyrroline-5-carboxylate. The sequence is that of Gamma-glutamyl phosphate reductase from Teredinibacter turnerae (strain ATCC 39867 / T7901).